Here is a 528-residue protein sequence, read N- to C-terminus: Protein WHAT'S THIS FACTOR 1 homolog, chloroplastic (528 aa).

The N-terminal 73 residues, 1 to 73 (MEPKLLLSAH…KTRVVVEPVR (73 aa)), are a transit peptide targeting the chloroplast. Positions 80–408 (KELTFDSVVQ…VKEKMRALVS (329 aa)) constitute a PORR domain. Positions 410 to 528 (PRFPRRGGPR…FPDGTPREKW (119 aa)) are disordered. The span at 418-428 (PRKDEEGREVE) shows a compositional bias: basic and acidic residues. Over residues 429–491 (IDGSDADGEE…DDDDEDEEED (63 aa)) the composition is skewed to acidic residues.

The protein localises to the plastid. Its subcellular location is the chloroplast. In terms of biological role, RNA-binding protein involved in group II intron splicing. Binds specific group II introns and promotes their splicing. Functions in the context of a heterodimer with the ribonuclease III domain-containing protein RNC1. The chain is Protein WHAT'S THIS FACTOR 1 homolog, chloroplastic from Arabidopsis thaliana (Mouse-ear cress).